Here is a 192-residue protein sequence, read N- to C-terminus: Potassium-transporting ATPase KdpC subunit (192 aa).

The helical transmembrane segment at 7-27 (PLIVLFVVLAALTGLAYPAVM) threads the bilayer.

It belongs to the KdpC family. As to quaternary structure, the system is composed of three essential subunits: KdpA, KdpB and KdpC.

It localises to the cell inner membrane. In terms of biological role, part of the high-affinity ATP-driven potassium transport (or Kdp) system, which catalyzes the hydrolysis of ATP coupled with the electrogenic transport of potassium into the cytoplasm. This subunit acts as a catalytic chaperone that increases the ATP-binding affinity of the ATP-hydrolyzing subunit KdpB by the formation of a transient KdpB/KdpC/ATP ternary complex. In Paraburkholderia xenovorans (strain LB400), this protein is Potassium-transporting ATPase KdpC subunit.